Here is a 242-residue protein sequence, read N- to C-terminus: Segregation and condensation protein A (242 aa).

It belongs to the ScpA family. As to quaternary structure, component of a cohesin-like complex composed of ScpA, ScpB and the Smc homodimer, in which ScpA and ScpB bind to the head domain of Smc. The presence of the three proteins is required for the association of the complex with DNA.

The protein localises to the cytoplasm. Its function is as follows. Participates in chromosomal partition during cell division. May act via the formation of a condensin-like complex containing Smc and ScpB that pull DNA away from mid-cell into both cell halves. This is Segregation and condensation protein A from Lactococcus lactis subsp. cremoris (strain MG1363).